The following is a 148-amino-acid chain: F-box protein At3g55900 (148 aa).

One can recognise an F-box domain in the interval 9 to 59 (CRNLSELPQELLYKILGLLPTRNVVSTSLISHQRRSQFHWMERLKFRYPRL).

This is F-box protein At3g55900 from Arabidopsis thaliana (Mouse-ear cress).